The sequence spans 399 residues: S-adenosylmethionine synthase (399 aa).

Residue H16 participates in ATP binding. Position 18 (D18) interacts with Mg(2+). E44 contributes to the K(+) binding site. L-methionine is bound by residues E57 and Q100. Residues 100-110 are flexible loop; it reads QSSDIAQGVNE. ATP-binding positions include 177-179, 244-245, D253, 259-260, A276, and K280; these read DAK, RF, and RK. D253 provides a ligand contact to L-methionine. K284 lines the L-methionine pocket.

The protein belongs to the AdoMet synthase family. Homotetramer; dimer of dimers. It depends on Mg(2+) as a cofactor. Requires K(+) as cofactor.

Its subcellular location is the cytoplasm. It catalyses the reaction L-methionine + ATP + H2O = S-adenosyl-L-methionine + phosphate + diphosphate. It functions in the pathway amino-acid biosynthesis; S-adenosyl-L-methionine biosynthesis; S-adenosyl-L-methionine from L-methionine: step 1/1. Catalyzes the formation of S-adenosylmethionine (AdoMet) from methionine and ATP. The overall synthetic reaction is composed of two sequential steps, AdoMet formation and the subsequent tripolyphosphate hydrolysis which occurs prior to release of AdoMet from the enzyme. In Lactococcus lactis subsp. cremoris (strain MG1363), this protein is S-adenosylmethionine synthase.